We begin with the raw amino-acid sequence, 197 residues long: ATP-dependent Clp protease proteolytic subunit 1 (197 aa).

Residue Ser-88 is the Nucleophile of the active site. His-113 is an active-site residue.

Belongs to the peptidase S14 family. In terms of assembly, fourteen ClpP subunits assemble into 2 heptameric rings which stack back to back to give a disk-like structure with a central cavity, resembling the structure of eukaryotic proteasomes.

Its subcellular location is the cytoplasm. It catalyses the reaction Hydrolysis of proteins to small peptides in the presence of ATP and magnesium. alpha-casein is the usual test substrate. In the absence of ATP, only oligopeptides shorter than five residues are hydrolyzed (such as succinyl-Leu-Tyr-|-NHMec, and Leu-Tyr-Leu-|-Tyr-Trp, in which cleavage of the -Tyr-|-Leu- and -Tyr-|-Trp bonds also occurs).. Functionally, cleaves peptides in various proteins in a process that requires ATP hydrolysis. Has a chymotrypsin-like activity. Plays a major role in the degradation of misfolded proteins. The sequence is that of ATP-dependent Clp protease proteolytic subunit 1 from Leifsonia xyli subsp. xyli (strain CTCB07).